Reading from the N-terminus, the 86-residue chain is Putative membrane protein insertion efficiency factor (86 aa).

This sequence belongs to the UPF0161 family.

The protein localises to the cell inner membrane. Functionally, could be involved in insertion of integral membrane proteins into the membrane. The chain is Putative membrane protein insertion efficiency factor from Pseudomonas aeruginosa (strain LESB58).